The primary structure comprises 645 residues: Cyclic nucleotide-gated channel rod photoreceptor subunit alpha (645 aa).

Topologically, residues 1-121 are cytoplasmic; it reads MKVGVIETHH…PAGNMYYNWL (121 aa). Residues 53 to 100 form a disordered region; that stretch reads NNNSNKDEEKKKKKEKKSKSENKKDGERQKNKEKKEKHKNKDKKKGKE. A compositionally biased stretch (basic and acidic residues) spans 70–86; sequence SKSENKKDGERQKNKEK. The span at 87-96 shows a compositional bias: basic residues; sequence KEKHKNKDKK. The chain crosses the membrane as a helical span at residues 122 to 143; sequence FCITMPVMYNWTMIIARACFDE. The Extracellular portion of the chain corresponds to 144–153; sequence LQNDYLAVWF. Residues 154–174 form a helical membrane-spanning segment; that stretch reads IVDYVSDVIYIADMFVRTRTG. Residues 175–199 lie on the Cytoplasmic side of the membrane; that stretch reads YLEQGLLVKEEQKLKEKYKSSLQFK. Residues 200–218 form a helical membrane-spanning segment; the sequence is LDFLSIIPTDLLYFKLGLN. Residues 219-223 are Extracellular-facing; that stretch reads YPELR. The helical transmembrane segment at 224–242 threads the bilayer; sequence INRLLRVARMFEFFQRTET. Over 243-249 the chain is Cytoplasmic; it reads RTNYPNI. Residues 250 to 273 form a helical membrane-spanning segment; the sequence is FRISNLVMYIVIIIHWNACVYYSI. Over 274-296 the chain is Extracellular; that stretch reads SKAIGFGADTWVYPNTSHPEFAR. The next 2 membrane-spanning stretches (helical) occupy residues 297–331 and 332–356; these read LTRK…FFVV and VDFL…SNMN. Residues 357–645 are Cytoplasmic-facing; sequence AARAEFQAKI…TDKPGVTKTE (289 aa). 3',5'-cyclic GMP contacts are provided by residues 439–561, Glu-498, and Arg-513; that span reads LLVE…DGLL.

Belongs to the cyclic nucleotide-gated cation channel (TC 1.A.1.5) family.

It localises to the membrane. Functionally, visual signal transduction is mediated by a G-protein coupled cascade using cGMP as second messenger. This protein can be activated by cGMP which leads to an opening of the cation channel and thereby causing a depolarization of rod photoreceptors. The polypeptide is Cyclic nucleotide-gated channel rod photoreceptor subunit alpha (Gallus gallus (Chicken)).